The chain runs to 287 residues: Elongation factor Ts (287 aa).

Residues 80 to 83 (TDFL) are involved in Mg(2+) ion dislocation from EF-Tu.

It belongs to the EF-Ts family.

The protein localises to the cytoplasm. Associates with the EF-Tu.GDP complex and induces the exchange of GDP to GTP. It remains bound to the aminoacyl-tRNA.EF-Tu.GTP complex up to the GTP hydrolysis stage on the ribosome. The chain is Elongation factor Ts from Pseudomonas putida (strain ATCC 47054 / DSM 6125 / CFBP 8728 / NCIMB 11950 / KT2440).